Here is a 158-residue protein sequence, read N- to C-terminus: NAD(P)H-quinone oxidoreductase subunit J, chloroplastic (158 aa).

It belongs to the complex I 30 kDa subunit family. In terms of assembly, NDH is composed of at least 16 different subunits, 5 of which are encoded in the nucleus.

The protein localises to the plastid. Its subcellular location is the chloroplast thylakoid membrane. The enzyme catalyses a plastoquinone + NADH + (n+1) H(+)(in) = a plastoquinol + NAD(+) + n H(+)(out). It carries out the reaction a plastoquinone + NADPH + (n+1) H(+)(in) = a plastoquinol + NADP(+) + n H(+)(out). NDH shuttles electrons from NAD(P)H:plastoquinone, via FMN and iron-sulfur (Fe-S) centers, to quinones in the photosynthetic chain and possibly in a chloroplast respiratory chain. The immediate electron acceptor for the enzyme in this species is believed to be plastoquinone. Couples the redox reaction to proton translocation, and thus conserves the redox energy in a proton gradient. The polypeptide is NAD(P)H-quinone oxidoreductase subunit J, chloroplastic (Nandina domestica (Heavenly bamboo)).